The primary structure comprises 337 residues: Inositol 2-dehydrogenase (337 aa).

This sequence belongs to the Gfo/Idh/MocA family. Homotetramer.

The enzyme catalyses myo-inositol + NAD(+) = scyllo-inosose + NADH + H(+). Its function is as follows. Involved in the oxidation of myo-inositol (MI) to 2-keto-myo-inositol (2KMI or 2-inosose). The polypeptide is Inositol 2-dehydrogenase (Pseudarthrobacter chlorophenolicus (strain ATCC 700700 / DSM 12829 / CIP 107037 / JCM 12360 / KCTC 9906 / NCIMB 13794 / A6) (Arthrobacter chlorophenolicus)).